Reading from the N-terminus, the 635-residue chain is Threonine--tRNA ligase (635 aa).

Positions 1-61 (MINISLSDGS…ENNCKLRILT (61 aa)) constitute a TGS domain. Positions 242–533 (DHRKLGRELD…LIEEYAGCFP (292 aa)) are catalytic. Residues Cys-333, His-384, and His-510 each contribute to the Zn(2+) site.

It belongs to the class-II aminoacyl-tRNA synthetase family. As to quaternary structure, homodimer. The cofactor is Zn(2+).

Its subcellular location is the cytoplasm. It carries out the reaction tRNA(Thr) + L-threonine + ATP = L-threonyl-tRNA(Thr) + AMP + diphosphate + H(+). In terms of biological role, catalyzes the attachment of threonine to tRNA(Thr) in a two-step reaction: L-threonine is first activated by ATP to form Thr-AMP and then transferred to the acceptor end of tRNA(Thr). Also edits incorrectly charged L-seryl-tRNA(Thr). The chain is Threonine--tRNA ligase from Rickettsia canadensis (strain McKiel).